A 194-amino-acid polypeptide reads, in one-letter code: Fibroblast growth factor 7 (194 aa).

Residues 1–31 (MHKWILTWILPTLLYRSCFHIICLVGTISLA) form the signal peptide. Residue Asn-45 is glycosylated (N-linked (GlcNAc...) asparagine).

It belongs to the heparin-binding growth factors family. In terms of assembly, interacts with FGFBP1. Interacts with FGFR2. Affinity between fibroblast growth factors (FGFs) and their receptors is increased by heparan sulfate glycosaminoglycans that function as coreceptors. Epithelial cell.

The protein resides in the secreted. Plays an important role in the regulation of embryonic development, cell proliferation and cell differentiation. Required for normal branching morphogenesis. Growth factor active on keratinocytes. Possible major paracrine effector of normal epithelial cell proliferation. In Homo sapiens (Human), this protein is Fibroblast growth factor 7 (FGF7).